Here is a 577-residue protein sequence, read N- to C-terminus: Arginine--tRNA ligase (577 aa).

The 'HIGH' region motif lies at 122-132; sequence PNVAKEMHVGH.

This sequence belongs to the class-I aminoacyl-tRNA synthetase family. Monomer.

The protein resides in the cytoplasm. It carries out the reaction tRNA(Arg) + L-arginine + ATP = L-arginyl-tRNA(Arg) + AMP + diphosphate. In Salmonella paratyphi A (strain ATCC 9150 / SARB42), this protein is Arginine--tRNA ligase.